The primary structure comprises 186 residues: Chromosome-anchoring protein RacA (186 aa).

Positions 3-23 form a DNA-binding region, H-T-H motif; it reads TADAANELGVSTKTVQRWVKQ. A coiled-coil region spans residues 90-170; sequence ERLEERLQRF…NRREKDTAVR (81 aa). The tract at residues 158–186 is disordered; that stretch reads ESMNRREKDTAVRREEKKPKSKLKSIFSF. Over residues 160 to 175 the composition is skewed to basic and acidic residues; the sequence is MNRREKDTAVRREEKK.

It belongs to the RacA family.

The protein resides in the cytoplasm. Its function is as follows. Required for the formation of axial filaments and for anchoring the origin regions at the cell poles in sporulating cells, thus ensuring proper chromosome segregation in the prespore. Binds in a dispersed manner throughout the chromosome but preferentially to sites clustered in the origin portion of the chromosome, causing condensation of the chromosome and its remodeling into an elongated, anchored structure. The sequence is that of Chromosome-anchoring protein RacA from Bacillus licheniformis (strain ATCC 14580 / DSM 13 / JCM 2505 / CCUG 7422 / NBRC 12200 / NCIMB 9375 / NCTC 10341 / NRRL NRS-1264 / Gibson 46).